We begin with the raw amino-acid sequence, 151 residues long: Arginine repressor (151 aa).

The protein belongs to the ArgR family.

Its subcellular location is the cytoplasm. Its pathway is amino-acid biosynthesis; L-arginine biosynthesis [regulation]. In terms of biological role, regulates arginine biosynthesis genes. The polypeptide is Arginine repressor (Lachnospira eligens (strain ATCC 27750 / DSM 3376 / VPI C15-48 / C15-B4) (Eubacterium eligens)).